The chain runs to 88 residues: Acyl-CoA-binding domain-containing protein 7 (88 aa).

The 86-residue stretch at 3–88 (LQADFDRAAE…AKELIEKYGI (86 aa)) folds into the ACB domain. Residues Arg15, 30 to 34 (YGLYK), Lys56, and Tyr75 contribute to the an acyl-CoA site.

This sequence belongs to the ACBD7 family.

Functionally, binds medium- and long-chain acyl-CoA esters. This Homo sapiens (Human) protein is Acyl-CoA-binding domain-containing protein 7 (ACBD7).